Here is a 134-residue protein sequence, read N- to C-terminus: Cytochrome b5 (134 aa).

N-acetylalanine is present on alanine 2. N6-acetyllysine is present on residues lysine 7, lysine 10, and lysine 19. The Cytochrome b5 heme-binding domain maps to 9–85 (VKYYTLEEIQ…SKTFIIGELH (77 aa)). 2 residues coordinate heme: histidine 44 and histidine 68. The helical transmembrane segment at 109–131 (WWTNWVIPAISALVVSLMYHFYT) threads the bilayer.

Belongs to the cytochrome b5 family.

The protein resides in the endoplasmic reticulum membrane. The protein localises to the microsome membrane. It is found in the cytoplasm. In terms of biological role, cytochrome b5 is a membrane-bound hemoprotein functioning as an electron carrier for several membrane-bound oxygenases. The sequence is that of Cytochrome b5 (CYB5A) from Sus scrofa (Pig).